The following is a 269-amino-acid chain: Protein MrkE (269 aa).

The region spanning 59 to 173 is the Response regulatory domain; the sequence is KVIIVEDEFL…RIINMLQKLT (115 aa). Residue D110 is modified to 4-aspartylphosphate. Residues 197-269 enclose the HTH LytTR-type domain; the sequence is INLIKDERII…VAQVSIANRF (73 aa).

Functionally, may be involved in the regulation of fimbrial expression. The sequence is that of Protein MrkE (mrkE) from Klebsiella pneumoniae.